The sequence spans 212 residues: Anaphase-promoting complex subunit 10 (212 aa).

Residues 12 to 196 enclose the DOC domain; sequence MDEEERTSSR…PSAVLEARPG (185 aa).

It belongs to the APC10 family. As to quaternary structure, the APC/C complex is probably composed of at least 12 subunits: apc-2, apc-10, apc-11, cdc-26, emb-1, emb-27, emb-30, mat-1, mat-2, mat-3, such-1 and gfi-3.

It functions in the pathway protein modification; protein ubiquitination. Its function is as follows. Probable component of the anaphase promoting complex/cyclosome (APC/C), a cell cycle-regulated E3 ubiquitin ligase that controls progression through mitosis and the G1 phase of the cell cycle. The APC/C complex acts by mediating ubiquitination and subsequent degradation of target proteins. This Caenorhabditis elegans protein is Anaphase-promoting complex subunit 10.